A 53-amino-acid chain; its full sequence is Large ribosomal subunit protein eL40 (53 aa).

This sequence belongs to the eukaryotic ribosomal protein eL40 family.

In Staphylothermus marinus (strain ATCC 43588 / DSM 3639 / JCM 9404 / F1), this protein is Large ribosomal subunit protein eL40.